A 255-amino-acid polypeptide reads, in one-letter code: tRNA (adenine(58)-N(1))-methyltransferase TrmI (255 aa).

S-adenosyl-L-methionine-binding positions include 104–107 (SGGL), E125, H130, E155, and D170.

It belongs to the class I-like SAM-binding methyltransferase superfamily. TRM61 family. As to quaternary structure, homotetramer composed of a dimer of dimers.

The catalysed reaction is adenosine(58) in tRNA + S-adenosyl-L-methionine = N(1)-methyladenosine(58) in tRNA + S-adenosyl-L-homocysteine + H(+). In terms of biological role, catalyzes the S-adenosyl-L-methionine-dependent formation of N(1)-methyladenine at position 58 (m1A58) in tRNA. Is required for cell growth at extreme temperatures. The protein is tRNA (adenine(58)-N(1))-methyltransferase TrmI (trmI) of Thermus thermophilus (strain ATCC BAA-163 / DSM 7039 / HB27).